The following is a 41-amino-acid chain: Conotoxin Bu22 (41 aa).

The propeptide occupies 1–25 (SDRASDGRNAAANDRASDLVALTVR). Cystine bridges form between cysteine 27–cysteine 33 and cysteine 28–cysteine 40.

It belongs to the conotoxin A superfamily. In terms of tissue distribution, expressed by the venom duct.

It localises to the secreted. This chain is Conotoxin Bu22, found in Conus bullatus (Bubble cone).